The following is a 308-amino-acid chain: Putative S-adenosyl-L-methionine-dependent methyltransferase Mjls_1073 (308 aa).

S-adenosyl-L-methionine-binding positions include D133 and 162–163 (DL).

It belongs to the UPF0677 family.

Functionally, exhibits S-adenosyl-L-methionine-dependent methyltransferase activity. This Mycobacterium sp. (strain JLS) protein is Putative S-adenosyl-L-methionine-dependent methyltransferase Mjls_1073.